The chain runs to 69 residues: Putative membrane protein insertion efficiency factor (69 aa).

Belongs to the UPF0161 family.

It is found in the cell inner membrane. Its function is as follows. Could be involved in insertion of integral membrane proteins into the membrane. The polypeptide is Putative membrane protein insertion efficiency factor (Nitrosomonas europaea (strain ATCC 19718 / CIP 103999 / KCTC 2705 / NBRC 14298)).